Here is a 441-residue protein sequence, read N- to C-terminus: Anti-sigma-I factor RsgI (441 aa).

Topologically, residues Met-1–Ser-53 are cytoplasmic. Positions Asn-3 to Arg-51 constitute a RsgI N-terminal anti-sigma domain. A helical transmembrane segment spans residues Ile-54–Tyr-76. Over Asn-77–Gln-441 the chain is Extracellular. The tract at residues Glu-213–Gln-441 is disordered. The segment covering Ser-219–Val-230 has biased composition (polar residues). Low complexity predominate over residues Pro-240 to Ser-251. The span at Ser-252–Asn-281 shows a compositional bias: basic and acidic residues. Low complexity-rich tracts occupy residues Gly-282–Asn-328, Asn-336–Asn-358, and Asn-366–Gly-408. Over residues Lys-411–Glu-428 the composition is skewed to polar residues. Over residues Asn-429–Gln-441 the composition is skewed to basic and acidic residues.

In terms of assembly, interacts (via RsgI N-terminal anti-sigma domain) with SigI.

It localises to the cell membrane. Its function is as follows. Anti-sigma factor for SigI. Negatively regulates SigI activity through direct interaction. Has no direct effect on virulence gene expression. This Bacillus anthracis protein is Anti-sigma-I factor RsgI.